Reading from the N-terminus, the 156-residue chain is Small ribosomal subunit protein uS7 (156 aa).

Belongs to the universal ribosomal protein uS7 family. As to quaternary structure, part of the 30S ribosomal subunit. Contacts proteins S9 and S11.

In terms of biological role, one of the primary rRNA binding proteins, it binds directly to 16S rRNA where it nucleates assembly of the head domain of the 30S subunit. Is located at the subunit interface close to the decoding center, probably blocks exit of the E-site tRNA. The protein is Small ribosomal subunit protein uS7 of Oleidesulfovibrio alaskensis (strain ATCC BAA-1058 / DSM 17464 / G20) (Desulfovibrio alaskensis).